The chain runs to 144 residues: Pleckstrin homology-like domain family A member 2 (144 aa).

The PH domain occupies 18-111 (ILCEGELEKR…AAITMALIDF (94 aa)). Position 140 is a phosphoserine (Ser140).

This sequence belongs to the PHLDA2 family. In terms of tissue distribution, specifically expressed at high levels in extraembryonic tissues in the developing conceptus (at protein level). Expressed in placenta and yolc sac. Expressed at low levels in fetal liver and kidney.

The protein resides in the cytoplasm. Its subcellular location is the membrane. Its function is as follows. Plays a role in regulating placenta growth. May act via its PH domain that competes with other PH domain-containing proteins, thereby preventing their binding to membrane lipids. This Mus musculus (Mouse) protein is Pleckstrin homology-like domain family A member 2 (Phlda2).